Consider the following 351-residue polypeptide: ABC transporter nucleoside-binding protein BmpA (351 aa).

The first 21 residues, 1–21, serve as a signal peptide directing secretion; the sequence is MKKRVIAVSAIALASVAVLAG. The N-palmitoyl cysteine moiety is linked to residue C22. C22 is lipidated: S-diacylglycerol cysteine.

Belongs to the BMP lipoprotein family. The complex is composed of two ATP-binding proteins (NupA), two transmembrane proteins (NupB and NupC) and a solute-binding protein (BmpA).

It is found in the cell membrane. In terms of biological role, part of an ABC transporter complex involved in the uptake of all common nucleosides. This Lactococcus lactis subsp. cremoris (strain MG1363) protein is ABC transporter nucleoside-binding protein BmpA.